The sequence spans 287 residues: Cysteine-rich repeat secretory protein 58 (287 aa).

The signal sequence occupies residues 1-20 (METTKKLFALLCLFVTMNQA). Over 21-267 (ISVSDPDDME…GSFSHRGNNK (247 aa)) the chain is Extracellular. 2 Gnk2-homologous domains span residues 28-130 (DMET…DKFF) and 135-246 (ETNP…TYNS). Asn39, Asn43, Asn59, Asn68, Asn89, Asn99, Asn107, Asn208, and Asn245 each carry an N-linked (GlcNAc...) asparagine glycan. The helical transmembrane segment at 268–286 (LLGGMVLAVSVSVFAFLSL) threads the bilayer. Val287 is a topological domain (cytoplasmic).

The protein belongs to the cysteine-rich repeat secretory protein family.

Its subcellular location is the membrane. The polypeptide is Cysteine-rich repeat secretory protein 58 (CRRSP58) (Arabidopsis thaliana (Mouse-ear cress)).